Consider the following 305-residue polypeptide: Cytochrome c biogenesis protein CcsA (305 aa).

Transmembrane regions (helical) follow at residues 13–33 (IYFSFILVITLVFGGTLVYPV), 42–62 (KGIIFPFFCITLNLIIRWFYS), 70–90 (LYESLMFFSWNFCLIPFFIDI), 97–117 (WIGVITAPSALFTHAFATLIL), 135–155 (WLIMHVTIIFLGYVTLLCGSL), 212–232 (YTIVIGFTFLTIGILSGAVWA), 242–262 (WDPKEIWALITWLIFANYIHI), and 276–296 (VASLGLFFVWICYFGVNILGI).

Belongs to the CcmF/CycK/Ccl1/NrfE/CcsA family. May interact with Ccs1.

The protein localises to the plastid. Its subcellular location is the chloroplast thylakoid membrane. Functionally, required during biogenesis of c-type cytochromes (cytochrome c6 and cytochrome f) at the step of heme attachment. This Welwitschia mirabilis (Tree tumbo) protein is Cytochrome c biogenesis protein CcsA.